The sequence spans 23 residues: Protein YqfH (23 aa).

This chain is Protein YqfH, found in Escherichia coli (strain K12).